We begin with the raw amino-acid sequence, 276 residues long: Rhomboid protease GlpG (276 aa).

6 consecutive transmembrane segments (helical) span residues Gly94–Ile114, Ile142–Gly162, Leu169–Gln189, Phe192–Trp212, Leu229–Met249, and Ala250–Leu270. Catalysis depends on Ser201, which acts as the Nucleophile. His254 is a catalytic residue.

This sequence belongs to the peptidase S54 family.

Its subcellular location is the cell inner membrane. The catalysed reaction is Cleaves type-1 transmembrane domains using a catalytic dyad composed of serine and histidine that are contributed by different transmembrane domains.. In terms of biological role, rhomboid-type serine protease that catalyzes intramembrane proteolysis. This Salmonella dublin (strain CT_02021853) protein is Rhomboid protease GlpG.